Consider the following 1457-residue polypeptide: Receptor-type tyrosine-protein phosphatase kappa (1457 aa).

Positions 1–25 (MDVAAAALPAFVALWLLYPWPLLGS) are cleaved as a signal peptide. Over 26–752 (ALGQFSAGGC…PAKQTDRVVK (727 aa)) the chain is Extracellular. One can recognise an MAM domain in the interval 30–193 (FSAGGCTFDD…IQVLSYPCDK (164 aa)). N-linked (GlcNAc...) asparagine glycans are attached at residues Asn100, Asn139, and Asn210. One can recognise an Ig-like C2-type domain in the interval 195–280 (PHFLRLGDVE…TQSERGSGVS (86 aa)). The cysteines at positions 215 and 269 are disulfide-linked. 4 consecutive Fibronectin type-III domains span residues 293–388 (PIAP…CAEP), 391–487 (TPKT…TDED), 490–594 (GPVP…SAPS), and 595–688 (LPDY…TVGD). N-linked (GlcNAc...) asparagine glycans are attached at residues Asn415, Asn423, Asn435, Asn461, Asn551, Asn585, Asn589, Asn606, and Asn689. The chain crosses the membrane as a helical span at residues 753 to 774 (IAGISAGILVFILLLLVVIVIV). Residues 775–1457 (KKSKLAKKRK…DVALEYLESS (683 aa)) are Cytoplasmic-facing. The residue at position 868 (Ser868) is a Phosphoserine. 2 Tyrosine-protein phosphatase domains span residues 899 to 1159 (FKEE…ILEA) and 1191 to 1453 (LKDE…ALEY). Residues Asp1068, 1100–1106 (CSAGAGR), and Gln1144 each bind substrate. Cys1100 (phosphocysteine intermediate) is an active-site residue. Cys1394 functions as the Phosphocysteine intermediate in the catalytic mechanism.

The protein belongs to the protein-tyrosine phosphatase family. Receptor class 2B subfamily. Post-translationally, this protein undergoes proteolytic processing. High levels in liver and kidney. Lower levels in lung, brain and heart. Not seen in spleen and testis.

It localises to the membrane. It carries out the reaction O-phospho-L-tyrosyl-[protein] + H2O = L-tyrosyl-[protein] + phosphate. Its function is as follows. Regulation of processes involving cell contact and adhesion such as growth control, tumor invasion, and metastasis. Negative regulator of EGFR signaling pathway. Forms complexes with beta-catenin and gamma-catenin/plakoglobin. Beta-catenin may be a substrate for the catalytic activity of PTPRK/PTP-kappa. In Mus musculus (Mouse), this protein is Receptor-type tyrosine-protein phosphatase kappa (Ptprk).